We begin with the raw amino-acid sequence, 424 residues long: Vasopressin V1a receptor (424 aa).

Residues 1-40 form a disordered region; the sequence is MSFPRGSQDRSVGNSSPWWPLTTEGSNGSQEAARLGEGDS. At 1–52 the chain is on the extracellular side; it reads MSFPRGSQDRSVGNSSPWWPLTTEGSNGSQEAARLGEGDSPLGDVRNEELAK. Polar residues predominate over residues 9–30; it reads DRSVGNSSPWWPLTTEGSNGSQ. N-linked (GlcNAc...) asparagine glycosylation is present at Asn-27. The chain crosses the membrane as a helical span at residues 53–76; it reads LEIAVLAVIFVVAVLGNSSVLLAL. Over 77 to 88 the chain is Cytoplasmic; sequence HRTPRKTSRMHL. Residues 89–110 traverse the membrane as a helical segment; that stretch reads FIRHLSLADLAVAFFQVLPQLC. Topologically, residues 111-125 are extracellular; it reads WDITYRFRGPDWLCR. A disulfide bond links Cys-124 and Cys-205. The helical transmembrane segment at 126-147 threads the bilayer; that stretch reads VVKHLQVFAMFASAYMLVVMTA. The Cytoplasmic segment spans residues 148–168; it reads DRYIAVCHPLKTLQQPARRSR. Residues 169–190 traverse the membrane as a helical segment; the sequence is LMIATSWVLSFILSTPQYFIFS. Over 191–220 the chain is Extracellular; the sequence is VIEIEVNNGTKTQDCWATFIQPWGTRAYVT. A helical membrane pass occupies residues 221–241; that stretch reads WMTSGVFVAPVVVLGTCYGFI. The Cytoplasmic portion of the chain corresponds to 242–299; it reads CYHIWRNIRGKTASSRHSKGDKGSGEAVGPFHKGLLVTPCVSSVKSISRAKIRTVKMT. The chain crosses the membrane as a helical span at residues 300–319; sequence FVIVSAYILCWAPFFIVQMW. Over 320–337 the chain is Extracellular; that stretch reads SVWDENFIWTDSENPSIT. Residues 338 to 357 traverse the membrane as a helical segment; that stretch reads ITALLASLNSCCNPWIYMFF. At 358-424 the chain is on the cytoplasmic side; it reads SGHLLQDCVQ…KSIRFIPVST (67 aa). Residues Cys-371 and Cys-372 are each lipidated (S-palmitoyl cysteine). The interval 383 to 416 is disordered; the sequence is DSDSMSRRQTSYSNNRSPTNSTGMWKDSPKSSKS. The span at 389-405 shows a compositional bias: polar residues; the sequence is RRQTSYSNNRSPTNSTG. The residue at position 410 (Ser-410) is a Phosphoserine.

The protein belongs to the G-protein coupled receptor 1 family. Vasopressin/oxytocin receptor subfamily. Post-translationally, palmitoylated on three cysteine residues, of which only two are identified. Localized within gonadotropes of the anterior pituitary of the brain. Broadly distributed throughout the cerebral cortex.

It localises to the cell membrane. The protein localises to the cytoplasmic vesicle membrane. Receptor for arginine vasopressin. The activity of this receptor is mediated by G proteins which activate a phosphatidyl-inositol-calcium second messenger system. Involved in social memory formation. The chain is Vasopressin V1a receptor (Avpr1a) from Rattus norvegicus (Rat).